Consider the following 219-residue polypeptide: Vesicle-associated membrane protein 711 (219 aa).

At Ala-2 the chain carries N-acetylalanine. At 2–189 (AILYALVARG…RSNVWWRNCK (188 aa)) the chain is on the cytoplasmic side. A Longin domain is found at 7–111 (LVARGTVVLS…AMNEEFSRVL (105 aa)). The v-SNARE coiled-coil homology domain maps to 126–186 (RINRIKGEMN…RRFRSNVWWR (61 aa)). Residues 190 to 210 (LTVLLILLLLVIIYIAVAFLC) traverse the membrane as a helical; Anchor for type IV membrane protein segment. Residues 211-219 (HGPTLPSCI) are Vesicular-facing.

This sequence belongs to the synaptobrevin family. Expressed in flowers, leaves, stems and roots.

The protein resides in the vacuole membrane. It is found in the prevacuolar compartment membrane. In terms of biological role, involved in the targeting and/or fusion of transport vesicles to their target membrane. The protein is Vesicle-associated membrane protein 711 of Arabidopsis thaliana (Mouse-ear cress).